The primary structure comprises 319 residues: tRNA dimethylallyltransferase (319 aa).

16–23 (GPTASGKS) contacts ATP. Residue 18–23 (TASGKS) coordinates substrate. The tract at residues 46–49 (DSMV) is interaction with substrate tRNA.

The protein belongs to the IPP transferase family. As to quaternary structure, monomer. Requires Mg(2+) as cofactor.

It carries out the reaction adenosine(37) in tRNA + dimethylallyl diphosphate = N(6)-dimethylallyladenosine(37) in tRNA + diphosphate. Its function is as follows. Catalyzes the transfer of a dimethylallyl group onto the adenine at position 37 in tRNAs that read codons beginning with uridine, leading to the formation of N6-(dimethylallyl)adenosine (i(6)A). In Cutibacterium acnes (strain DSM 16379 / KPA171202) (Propionibacterium acnes), this protein is tRNA dimethylallyltransferase.